Reading from the N-terminus, the 306-residue chain is Protein LOT5 (306 aa).

Belongs to the LOT5 family.

The protein localises to the cytoplasm. Its subcellular location is the nucleus. The protein is Protein LOT5 (LOT5) of Saccharomyces cerevisiae (strain ATCC 204508 / S288c) (Baker's yeast).